The following is a 560-amino-acid chain: DNA ligase B (560 aa).

Lysine 124 (N6-AMP-lysine intermediate) is an active-site residue.

Belongs to the NAD-dependent DNA ligase family. LigB subfamily.

It carries out the reaction NAD(+) + (deoxyribonucleotide)n-3'-hydroxyl + 5'-phospho-(deoxyribonucleotide)m = (deoxyribonucleotide)n+m + AMP + beta-nicotinamide D-nucleotide.. In terms of biological role, catalyzes the formation of phosphodiester linkages between 5'-phosphoryl and 3'-hydroxyl groups in double-stranded DNA using NAD as a coenzyme and as the energy source for the reaction. This Escherichia coli O157:H7 protein is DNA ligase B.